Consider the following 425-residue polypeptide: Serine--tRNA ligase (425 aa).

232 to 234 provides a ligand contact to L-serine; sequence TSE. Residues 263-265 and Val-279 contribute to the ATP site; that span reads RRE. Glu-286 serves as a coordination point for L-serine. 350 to 353 serves as a coordination point for ATP; that stretch reads EVVS. L-serine is bound at residue Thr-387.

It belongs to the class-II aminoacyl-tRNA synthetase family. Type-1 seryl-tRNA synthetase subfamily. Homodimer. The tRNA molecule binds across the dimer.

It localises to the cytoplasm. The enzyme catalyses tRNA(Ser) + L-serine + ATP = L-seryl-tRNA(Ser) + AMP + diphosphate + H(+). The catalysed reaction is tRNA(Sec) + L-serine + ATP = L-seryl-tRNA(Sec) + AMP + diphosphate + H(+). The protein operates within aminoacyl-tRNA biosynthesis; selenocysteinyl-tRNA(Sec) biosynthesis; L-seryl-tRNA(Sec) from L-serine and tRNA(Sec): step 1/1. Its function is as follows. Catalyzes the attachment of serine to tRNA(Ser). Is also able to aminoacylate tRNA(Sec) with serine, to form the misacylated tRNA L-seryl-tRNA(Sec), which will be further converted into selenocysteinyl-tRNA(Sec). In Methanoregula boonei (strain DSM 21154 / JCM 14090 / 6A8), this protein is Serine--tRNA ligase.